Here is a 204-residue protein sequence, read N- to C-terminus: Thiamine-phosphate synthase (204 aa).

Residues 37–41 (QVREK) and asparagine 69 contribute to the 4-amino-2-methyl-5-(diphosphooxymethyl)pyrimidine site. Aspartate 70 and aspartate 89 together coordinate Mg(2+). Residue serine 108 coordinates 4-amino-2-methyl-5-(diphosphooxymethyl)pyrimidine. Residue 134-136 (TGT) coordinates 2-[(2R,5Z)-2-carboxy-4-methylthiazol-5(2H)-ylidene]ethyl phosphate. Lysine 137 contributes to the 4-amino-2-methyl-5-(diphosphooxymethyl)pyrimidine binding site. 2-[(2R,5Z)-2-carboxy-4-methylthiazol-5(2H)-ylidene]ethyl phosphate contacts are provided by residues glycine 165 and 185 to 186 (IS).

The protein belongs to the thiamine-phosphate synthase family. Requires Mg(2+) as cofactor.

It carries out the reaction 2-[(2R,5Z)-2-carboxy-4-methylthiazol-5(2H)-ylidene]ethyl phosphate + 4-amino-2-methyl-5-(diphosphooxymethyl)pyrimidine + 2 H(+) = thiamine phosphate + CO2 + diphosphate. The catalysed reaction is 2-(2-carboxy-4-methylthiazol-5-yl)ethyl phosphate + 4-amino-2-methyl-5-(diphosphooxymethyl)pyrimidine + 2 H(+) = thiamine phosphate + CO2 + diphosphate. The enzyme catalyses 4-methyl-5-(2-phosphooxyethyl)-thiazole + 4-amino-2-methyl-5-(diphosphooxymethyl)pyrimidine + H(+) = thiamine phosphate + diphosphate. It participates in cofactor biosynthesis; thiamine diphosphate biosynthesis; thiamine phosphate from 4-amino-2-methyl-5-diphosphomethylpyrimidine and 4-methyl-5-(2-phosphoethyl)-thiazole: step 1/1. Functionally, condenses 4-methyl-5-(beta-hydroxyethyl)thiazole monophosphate (THZ-P) and 2-methyl-4-amino-5-hydroxymethyl pyrimidine pyrophosphate (HMP-PP) to form thiamine monophosphate (TMP). This Clostridium novyi (strain NT) protein is Thiamine-phosphate synthase.